We begin with the raw amino-acid sequence, 373 residues long: D-alanine--D-alanine ligase (373 aa).

Positions 156–363 constitute an ATP-grasp domain; the sequence is KKLLAAEGLP…YPTLLAAMVD (208 aa). 184 to 239 is a binding site for ATP; the sequence is RERLGLPVFVKPARGGSSIGVSRVTAWDELPAAVALARRHDPKVIVEAAVIGRELE. Residues Asp318, Glu330, and Asn332 each contribute to the Mg(2+) site.

Belongs to the D-alanine--D-alanine ligase family. Requires Mg(2+) as cofactor. The cofactor is Mn(2+).

The protein localises to the cytoplasm. It catalyses the reaction 2 D-alanine + ATP = D-alanyl-D-alanine + ADP + phosphate + H(+). The protein operates within cell wall biogenesis; peptidoglycan biosynthesis. Its function is as follows. Cell wall formation. The chain is D-alanine--D-alanine ligase from Mycolicibacterium smegmatis (strain ATCC 700084 / mc(2)155) (Mycobacterium smegmatis).